Reading from the N-terminus, the 113-residue chain is Protein translation factor SUI1 homolog 1 (113 aa).

The disordered stretch occupies residues 1–24; the sequence is MSELDSQVPTAFDPFADANAEDSG. Ser-2 is subject to N-acetylserine.

Belongs to the SUI1 family.

Functionally, probably involved in translation. The chain is Protein translation factor SUI1 homolog 1 from Arabidopsis thaliana (Mouse-ear cress).